The following is a 572-amino-acid chain: Protein IQ-DOMAIN 30 (572 aa).

The segment at 75-96 (SDDEIQVSEVQPTDSQDVASVP) is disordered. Residues 82–92 (SEVQPTDSQDV) are compositionally biased toward polar residues. 2 IQ domains span residues 108-136 (QEIAAVTVQAAYRGYLARRAFKILKGIIR) and 137-154 (LQALIRGHMVRRQAVSTL). The calmodulin-binding stretch occupies residues 159–178 (GIVRLQALARGREIRHSDIG). Disordered regions lie at residues 282-332 (RPKK…MDNP) and 399-572 (IQTH…EWKR). 2 stretches are compositionally biased toward polar residues: residues 291 to 305 (PSSNLDNSSVAQTSS) and 400 to 419 (QTHTPLGTNESLDSTLVNQI). Positions 428–455 (AEEKEDVKEERTPKQNHKENSAGKENQK) are enriched in basic and acidic residues. Polar residues-rich tracts occupy residues 459–493 (KASSVTATQTAEFQESGNGNQTSSPGIPSYMQATK), 502–514 (QGSSSPRQLGTTE), and 522–560 (LPSSGNSAKITSHSPKTRVSNSSGKSGNKTEKTLLSSRE).

Belongs to the IQD family. As to quaternary structure, binds to multiple calmodulin (CaM) in the presence of Ca(2+) and CaM-like proteins.

Its subcellular location is the nucleus envelope. It localises to the cytoplasm. The protein localises to the cytoskeleton. In terms of biological role, may be involved in cooperative interactions with calmodulins or calmodulin-like proteins. Recruits calmodulin proteins to microtubules, thus being a potential scaffold in cellular signaling and trafficking. May associate with nucleic acids and regulate gene expression at the transcriptional or post-transcriptional level. The chain is Protein IQ-DOMAIN 30 from Arabidopsis thaliana (Mouse-ear cress).